The chain runs to 962 residues: Protein suppressor of underreplication (962 aa).

5 disordered regions span residues 353 to 413 (EIVT…TRAA), 438 to 590 (TPTP…LSGS), 658 to 712 (NSSH…SPDL), 866 to 900 (QERT…TQAT), and 916 to 962 (QTSS…ELFK). Residues 372–382 (PRTKSKKKCSK) are compositionally biased toward basic residues. Over residues 386–395 (PCKEADLTDS) the composition is skewed to basic and acidic residues. Composition is skewed to polar residues over residues 438 to 448 (TPTPSGATTAI) and 480 to 489 (LTRSAESKIN). Over residues 524–552 (VKQESKAKAKPEQKKKIKTVDKPAQETPK) the composition is skewed to basic and acidic residues. The span at 553-562 (RKPGRPRKCK) shows a compositional bias: basic residues. Over residues 564–576 (LTETLGKSKTKPN) the composition is skewed to polar residues. Positions 673–683 (RRTKALKRKRK) are enriched in basic residues. Polar residues-rich tracts occupy residues 703–712 (RSATNKSPDL) and 866–880 (QERT…NSIV). Residues 885–894 (KSPKSPKHGA) are compositionally biased toward basic residues. Residues 916 to 944 (QTSSVESVSAPSTPVNPSTSAAACQTRTA) are compositionally biased toward polar residues. Residues 953-962 (TKRKRLELFK) show a composition bias toward basic residues.

The protein resides in the nucleus. Its subcellular location is the chromosome. In terms of biological role, required for underreplication of DNA, which is found in many late replicating euchromatic regions of salivary gland polytene chromosomes. Controls chromatin organization in polytene chromosomes. The protein is Protein suppressor of underreplication (SuUR) of Drosophila erecta (Fruit fly).